The primary structure comprises 97 residues: Aspartyl/glutamyl-tRNA(Asn/Gln) amidotransferase subunit C (97 aa).

It belongs to the GatC family. In terms of assembly, heterotrimer of A, B and C subunits.

It catalyses the reaction L-glutamyl-tRNA(Gln) + L-glutamine + ATP + H2O = L-glutaminyl-tRNA(Gln) + L-glutamate + ADP + phosphate + H(+). It carries out the reaction L-aspartyl-tRNA(Asn) + L-glutamine + ATP + H2O = L-asparaginyl-tRNA(Asn) + L-glutamate + ADP + phosphate + 2 H(+). Allows the formation of correctly charged Asn-tRNA(Asn) or Gln-tRNA(Gln) through the transamidation of misacylated Asp-tRNA(Asn) or Glu-tRNA(Gln) in organisms which lack either or both of asparaginyl-tRNA or glutaminyl-tRNA synthetases. The reaction takes place in the presence of glutamine and ATP through an activated phospho-Asp-tRNA(Asn) or phospho-Glu-tRNA(Gln). This is Aspartyl/glutamyl-tRNA(Asn/Gln) amidotransferase subunit C from Picosynechococcus sp. (strain ATCC 27264 / PCC 7002 / PR-6) (Agmenellum quadruplicatum).